A 505-amino-acid polypeptide reads, in one-letter code: Cytochrome P450 2K6 (505 aa).

A helical membrane pass occupies residues 7-27 (FLLQGSPTGTILGALLLFLVI). Cys448 provides a ligand contact to heme.

It belongs to the cytochrome P450 family. Heme serves as cofactor. Detected in liver and ovary.

It localises to the endoplasmic reticulum membrane. It is found in the microsome membrane. Metabolizes aflatoxin B1 (AFB1) to the cytotoxic derivative AFB1 exo-8,9-epoxide. Does not show activity towards lauric acid. This Danio rerio (Zebrafish) protein is Cytochrome P450 2K6.